Consider the following 706-residue polypeptide: Serotransferrin (706 aa).

The first 19 residues, 1–19 (MRLAIRALLACAVLGLCLA), serve as a signal peptide directing secretion. 2 Transferrin-like domains span residues 23 to 349 (VRWC…NLRE) and 363 to 691 (VKWC…NLRQ). 2 disulfides stabilise this stretch: Cys-26–Cys-64 and Cys-36–Cys-55. The residue at position 40 (Arg-40) is a Dimethylated arginine. Positions 79 and 111 each coordinate Fe(3+). Intrachain disulfides connect Cys-134–Cys-215, Cys-174–Cys-190, Cys-177–Cys-198, Cys-187–Cys-200, and Cys-248–Cys-262. The hydrogencarbonate site is built by Thr-136, Arg-140, Ala-142, and Gly-143. Tyr-209 provides a ligand contact to Fe(3+). His-270 lines the Fe(3+) pocket. Disulfide bonds link Cys-360–Cys-623, Cys-366–Cys-398, Cys-376–Cys-389, Cys-423–Cys-701, Cys-441–Cys-664, Cys-474–Cys-550, Cys-498–Cys-692, Cys-508–Cys-522, Cys-519–Cys-533, Cys-590–Cys-604, and Cys-642–Cys-647. Residue Ser-391 is modified to Phosphoserine. Fe(3+) is bound by residues Asp-413 and Tyr-449. Thr-476, Arg-480, Ala-482, and Gly-483 together coordinate hydrogencarbonate. N-linked (GlcNAc...) asparagine glycosylation is present at Asn-515. Tyr-544 contacts Fe(3+). His-612 provides a ligand contact to Fe(3+). The residue at position 693 (Ser-693) is a Phosphoserine.

Belongs to the transferrin family. As to quaternary structure, monomer. Part of a complex composed of SLC40A1/ferroportin, TF/transferrin and HEPH/hephaestin that transfers iron from cells to transferrin. As to expression, expressed by the liver and secreted in plasma.

The protein localises to the secreted. Transferrins are iron binding transport proteins which can bind two Fe(3+) ions in association with the binding of an anion, usually bicarbonate. It is responsible for the transport of iron from sites of absorption and heme degradation to those of storage and utilization. Serum transferrin may also have a further role in stimulating cell proliferation. This Equus caballus (Horse) protein is Serotransferrin (TF).